Here is a 505-residue protein sequence, read N- to C-terminus: Lysine--tRNA ligase (505 aa).

E415 and E422 together coordinate Mg(2+).

This sequence belongs to the class-II aminoacyl-tRNA synthetase family. Homodimer. Mg(2+) is required as a cofactor.

Its subcellular location is the cytoplasm. It carries out the reaction tRNA(Lys) + L-lysine + ATP = L-lysyl-tRNA(Lys) + AMP + diphosphate. The chain is Lysine--tRNA ligase from Salmonella typhi.